Consider the following 935-residue polypeptide: Isoleucine--tRNA ligase (935 aa).

The 'HIGH' region signature appears at 58-68; that stretch reads PYANGSIHVGH. Glu558 lines the L-isoleucyl-5'-AMP pocket. The 'KMSKS' region motif lies at 599–603; that stretch reads KMSKS. An ATP-binding site is contributed by Lys602. Zn(2+) is bound by residues Cys897, Cys900, Cys917, and Cys920.

The protein belongs to the class-I aminoacyl-tRNA synthetase family. IleS type 1 subfamily. Monomer. Requires Zn(2+) as cofactor.

The protein localises to the cytoplasm. It catalyses the reaction tRNA(Ile) + L-isoleucine + ATP = L-isoleucyl-tRNA(Ile) + AMP + diphosphate. In terms of biological role, catalyzes the attachment of isoleucine to tRNA(Ile). As IleRS can inadvertently accommodate and process structurally similar amino acids such as valine, to avoid such errors it has two additional distinct tRNA(Ile)-dependent editing activities. One activity is designated as 'pretransfer' editing and involves the hydrolysis of activated Val-AMP. The other activity is designated 'posttransfer' editing and involves deacylation of mischarged Val-tRNA(Ile). The sequence is that of Isoleucine--tRNA ligase from Francisella tularensis subsp. tularensis (strain WY96-3418).